A 1742-amino-acid chain; its full sequence is NACHT and WD repeat domain-containing protein 2 (1742 aa).

5 LRR repeats span residues 386-410 (FYEYKCESLNIVHNYILPSKAGHIN), 677-698 (LEDVLALDNSVMSELKENTRPS), 724-747 (VKNVTLLVWANRHLQLIAQKLYLQ), 883-906 (YSQEKELKFLANTLRSIKNKVTAF), and 925-953 (LPKLRHLLLECDKDGPKYCSIVPLHSSMD). The 328-residue stretch at 410–737 (NPLIIYGGPC…TLLVWANRHL (328 aa)) folds into the NACHT domain. 11 WD repeats span residues 963–1004 (LSSS…LLRQ), 1007–1046 (TAQSVILGMKLTSDEKYLVVATTNNTLLIYDNVNSCLLSE), 1140–1179 (FSGGFVKFLLILDTAQEMVMVDSEGSLSVWNTEDISSPQL), 1229–1271 (KHNE…ASLQ), 1272–1311 (EISGSIVKLVKSSHHNMLLSLSTSGVLSIWDIDIITAMSN), 1314–1353 (KTGKPIQSLLLPARGEIIYSLDGSDCVHKWNFSSGFIEAV), 1355–1394 (KHEGIVEHCVLTSTGDIMVTSDDKSSQYVWHTSSGENLFR), 1396–1434 (NGQRISQLLITHNDQFVVSLCEENASRVWRLATGHRVCN), 1476–1516 (EDGT…ICRR), 1522–1564 (NFLK…VHAS), and 1614–1653 (SLYKTPTFLALSQRHLNIIVGFDDGSIGIYTVVDRVDAAL).

The sequence is that of NACHT and WD repeat domain-containing protein 2 (NWD2) from Homo sapiens (Human).